The chain runs to 307 residues: Vesicle-trafficking protein SEC22a (307 aa).

At Ser-2 the chain carries N-acetylserine. Residues 2-187 lie on the Cytoplasmic side of the membrane; the sequence is SMILSASVIR…ISSAHQRLEP (186 aa). Ser-6 and Ser-8 each carry phosphoserine. Residues 8-119 enclose the Longin domain; the sequence is SVIRVRDGLP…YCFIEFDNFI (112 aa). Residues 188-208 form a helical membrane-spanning segment; sequence ATLSGIVGFILSLLCGALNLI. Residues 209 to 226 lie on the Lumenal side of the membrane; it reads RGFHAIESLLQSDGDDFN. Residues 227 to 247 traverse the membrane as a helical segment; that stretch reads YIIAFFLGTAACLYQCYLLVY. The Cytoplasmic portion of the chain corresponds to 248 to 253; it reads YTGWRN. The helical transmembrane segment at 254–271 threads the bilayer; sequence VKSFLTFGLICLCNMYLY. Over 272–274 the chain is Lumenal; the sequence is ELR. Residues 275–295 traverse the membrane as a helical segment; it reads NLWQLFFHVTVGAFVTLQIWL. The Cytoplasmic segment spans residues 296 to 307; that stretch reads RQAQGKAPDYDV.

Belongs to the synaptobrevin family.

It localises to the endoplasmic reticulum membrane. Its function is as follows. May be involved in vesicle transport between the ER and the Golgi complex. The protein is Vesicle-trafficking protein SEC22a (SEC22A) of Macaca fascicularis (Crab-eating macaque).